A 217-amino-acid polypeptide reads, in one-letter code: Probable GTP-binding protein EngB (217 aa).

The EngB-type G domain occupies Gly-29–Val-213. Residues Gly-37–Ser-44, Gly-64–Glu-68, Asp-91–Gly-94, Thr-158–Asp-161, and Thr-192–Ser-194 contribute to the GTP site. Mg(2+) contacts are provided by Ser-44 and Thr-66.

The protein belongs to the TRAFAC class TrmE-Era-EngA-EngB-Septin-like GTPase superfamily. EngB GTPase family. Mg(2+) serves as cofactor.

Necessary for normal cell division and for the maintenance of normal septation. This is Probable GTP-binding protein EngB from Rhizobium leguminosarum bv. trifolii (strain WSM2304).